The primary structure comprises 223 residues: MGQKINPTGFRVGVIRDWDAKWFADKADYANQLHEDLRIRKYIEKNLADASVDRIEIERTTKSRVDVSIQTAKPGMVIGKGGSEVEKLRTQLAKLTDTDEKGRSKRVFINIVEIKKPDLSAHLVGQQIAGDLERRVAFRRAMRGAIQRATRSGAKGIKVMVSGRLNGADIARIEQYTEGTVPLHTLRADIDYSWDEAMTAYGNLGIKTWIYRGDVLPQKKNSK.

Positions 39-115 (IRKYIEKNLA…RVFINIVEIK (77 aa)) constitute a KH type-2 domain.

Belongs to the universal ribosomal protein uS3 family. As to quaternary structure, part of the 30S ribosomal subunit. Forms a tight complex with proteins S10 and S14.

Binds the lower part of the 30S subunit head. Binds mRNA in the 70S ribosome, positioning it for translation. The sequence is that of Small ribosomal subunit protein uS3 from Leuconostoc mesenteroides subsp. mesenteroides (strain ATCC 8293 / DSM 20343 / BCRC 11652 / CCM 1803 / JCM 6124 / NCDO 523 / NBRC 100496 / NCIMB 8023 / NCTC 12954 / NRRL B-1118 / 37Y).